Here is a 93-residue protein sequence, read N- to C-terminus: Small ribosomal subunit protein bS6 (93 aa).

It belongs to the bacterial ribosomal protein bS6 family.

Its function is as follows. Binds together with bS18 to 16S ribosomal RNA. The protein is Small ribosomal subunit protein bS6 of Treponema denticola (strain ATCC 35405 / DSM 14222 / CIP 103919 / JCM 8153 / KCTC 15104).